Consider the following 293-residue polypeptide: Bifunctional protein FolD (293 aa).

Residues 166 to 168 (GAS) and Ile-232 contribute to the NADP(+) site.

The protein belongs to the tetrahydrofolate dehydrogenase/cyclohydrolase family. As to quaternary structure, homodimer.

The enzyme catalyses (6R)-5,10-methylene-5,6,7,8-tetrahydrofolate + NADP(+) = (6R)-5,10-methenyltetrahydrofolate + NADPH. The catalysed reaction is (6R)-5,10-methenyltetrahydrofolate + H2O = (6R)-10-formyltetrahydrofolate + H(+). It functions in the pathway one-carbon metabolism; tetrahydrofolate interconversion. In terms of biological role, catalyzes the oxidation of 5,10-methylenetetrahydrofolate to 5,10-methenyltetrahydrofolate and then the hydrolysis of 5,10-methenyltetrahydrofolate to 10-formyltetrahydrofolate. In Yersinia enterocolitica serotype O:8 / biotype 1B (strain NCTC 13174 / 8081), this protein is Bifunctional protein FolD.